The chain runs to 275 residues: Centromere protein V (275 aa).

Low complexity-rich tracts occupy residues 1–10 (MRRSRSSAAA) and 17–51 (RSGA…QAGS). Positions 1 to 109 (MRRSRSSAAA…ATPTSSASNL (109 aa)) are disordered. 2 positions are modified to phosphoserine: serine 18 and serine 21. Arginine 43 carries the omega-N-methylarginine modification. A compositionally biased stretch (pro residues) spans 79–100 (GEPPPPELALLPPPPPPPPTPA). Phosphothreonine is present on residues threonine 98, threonine 101, and threonine 103. The 113-residue stretch at 148 to 260 (HTGGCHCGAV…TEEFNGSDWE (113 aa)) folds into the CENP-V/GFA domain. The Zn(2+) site is built by cysteine 152, cysteine 154, cysteine 172, cysteine 174, cysteine 177, cysteine 216, and cysteine 219. At serine 257 the chain carries Phosphoserine.

The protein belongs to the Gfa family. Zn(2+) serves as cofactor.

The protein localises to the chromosome. It is found in the centromere. It localises to the kinetochore. The protein resides in the nucleus. Its subcellular location is the cytoplasm. The protein localises to the cytoskeleton. It is found in the spindle. Functionally, required for distribution of pericentromeric heterochromatin in interphase nuclei and for centromere formation and organization, chromosome alignment and cytokinesis. In Homo sapiens (Human), this protein is Centromere protein V (CENPV).